Consider the following 127-residue polypeptide: Glycine cleavage system H protein (127 aa).

The region spanning 22-104 is the Lipoyl-binding domain; that stretch reads NVRIGITDYA…YDKAWMIVVK (83 aa). Position 63 is an N6-lipoyllysine (K63).

It belongs to the GcvH family. The glycine cleavage system is composed of four proteins: P, T, L and H. Requires (R)-lipoate as cofactor.

Functionally, the glycine cleavage system catalyzes the degradation of glycine. The H protein shuttles the methylamine group of glycine from the P protein to the T protein. Its function is as follows. Is also involved in protein lipoylation via its role as an octanoyl/lipoyl carrier protein intermediate. This chain is Glycine cleavage system H protein, found in Geobacillus kaustophilus (strain HTA426).